A 213-amino-acid chain; its full sequence is ER lumen protein-retaining receptor (213 aa).

The Lumenal portion of the chain corresponds to 1–2 (MN). The chain crosses the membrane as a helical span at residues 3 to 21 (IFRITADLAHAVAIVILLL). Residues 22 to 35 (KIWKSRSCEGISGR) are Cytoplasmic-facing. A helical transmembrane segment spans residues 36-53 (SQILFAVTFFTRYLDLFT). Over 54 to 61 (SFYSLYNT) the chain is Lumenal. Residues 62–80 (VMKVLFLAGSIGTVYLMWV) traverse the membrane as a helical segment. The Cytoplasmic portion of the chain corresponds to 81–96 (KFKATYDRNNDTFRIE). Residues 97-110 (FLVIPSIILALIIN) form a helical membrane-spanning segment. The Lumenal segment spans residues 111-117 (HEFMFME). Residues 118-137 (VMWTFSIYLEAVAIMPQLFM) traverse the membrane as a helical segment. Over 138–149 (LSRTGNAETITA) the chain is Cytoplasmic. The helical transmembrane segment at 150 to 168 (HYLFALGSYRFLYIFNWVY) threads the bilayer. At 169 to 178 (RYYTESFFDP) the chain is on the lumenal side. A helical transmembrane segment spans residues 179 to 199 (IAVVAGIVQTVLYADFFYLYI). Residues 200 to 213 (TRVIQSNRQFEMSA) are Cytoplasmic-facing.

It belongs to the ERD2 family.

The protein resides in the endoplasmic reticulum membrane. Functionally, required for the retention of luminal endoplasmic reticulum proteins. Determines the specificity of the luminal ER protein retention system. Also required for normal vesicular traffic through the Golgi. This Caenorhabditis briggsae protein is ER lumen protein-retaining receptor (erd-2.1).